Reading from the N-terminus, the 341-residue chain is Putative ankyrin repeat protein FPV031 (341 aa).

ANK repeat units lie at residues 23–55 (DRNS…FQET), 58–87 (DNLT…IINQ), 92–124 (CGNT…ITNN), 125–158 (DGFT…IRDN), and 163–195 (TGLT…YSTC).

The sequence is that of Putative ankyrin repeat protein FPV031 (ANK3) from Fowlpox virus (strain NVSL) (FPV).